We begin with the raw amino-acid sequence, 267 residues long: Glutamate 5-kinase (267 aa).

Lys-14 contacts ATP. Ser-54, Asp-141, and Asn-157 together coordinate substrate. ATP is bound by residues 177–178 (SD) and 219–225 (TGGMLSK).

Belongs to the glutamate 5-kinase family.

It localises to the cytoplasm. It carries out the reaction L-glutamate + ATP = L-glutamyl 5-phosphate + ADP. It participates in amino-acid biosynthesis; L-proline biosynthesis; L-glutamate 5-semialdehyde from L-glutamate: step 1/2. Functionally, catalyzes the transfer of a phosphate group to glutamate to form L-glutamate 5-phosphate. In Streptococcus agalactiae serotype Ia (strain ATCC 27591 / A909 / CDC SS700), this protein is Glutamate 5-kinase.